A 222-amino-acid chain; its full sequence is Deoxyribose-phosphate aldolase (222 aa).

The active-site Proton donor/acceptor is the aspartate 92. Lysine 156 functions as the Schiff-base intermediate with acetaldehyde in the catalytic mechanism. Lysine 185 serves as the catalytic Proton donor/acceptor.

The protein belongs to the DeoC/FbaB aldolase family. DeoC type 1 subfamily. As to quaternary structure, homodimer.

The protein localises to the cytoplasm. The catalysed reaction is 2-deoxy-D-ribose 5-phosphate = D-glyceraldehyde 3-phosphate + acetaldehyde. It participates in carbohydrate degradation; 2-deoxy-D-ribose 1-phosphate degradation; D-glyceraldehyde 3-phosphate and acetaldehyde from 2-deoxy-alpha-D-ribose 1-phosphate: step 2/2. With respect to regulation, shows high stability to high concentrations of acetaldehyde. Functionally, catalyzes a reversible aldol reaction between acetaldehyde and D-glyceraldehyde 3-phosphate to generate 2-deoxy-D-ribose 5-phosphate. The sequence is that of Deoxyribose-phosphate aldolase from Aciduliprofundum boonei (strain DSM 19572 / T469).